The sequence spans 404 residues: HAGGKFDGGGYKVSGGLHGVGASVVNALSTELEVFVHREGKIHYQKYERGIPVADLKVIGDTDQTGTITRFKPDPEIFQETTVYDFDTLATRMRELAFLNRNIKLTIEDKRERKQKKEFHYEGGIKSYVEHLNRSKQPIHEEPVYVEGSKDGIQVEVSLQYNEGYTNNIYSFTNNIHTYEGGTHEVGFKTALTRVINDYGRKNSILKDADSNLTGEDVREGLTAIVSIKHPNPQFEGQTKTKLGNSEARTITESVFSEAFEKFLLENPNVARKIVEKGTMAARARVAAKKARELTRRKSALEVSSLPGKLADCSSKDPAISEIYIVEGDSAGGSAKQGRDRHFQAILPLKGKIINVEKARLDKILSNDEVRTIITAIGTNIGGDFDIEKARYHKVIIMTDADVD.

One can recognise a Toprim domain in the interval 321–404; that stretch reads SEIYIVEGDS…VIIMTDADVD (84 aa). Residues E327, D400, and D402 each coordinate Mg(2+).

Belongs to the type II topoisomerase GyrB family. Heterotetramer, composed of two GyrA and two GyrB chains. In the heterotetramer, GyrA contains the active site tyrosine that forms a transient covalent intermediate with DNA, while GyrB binds cofactors and catalyzes ATP hydrolysis. Mg(2+) is required as a cofactor. Requires Mn(2+) as cofactor. It depends on Ca(2+) as a cofactor.

It localises to the cytoplasm. The catalysed reaction is ATP-dependent breakage, passage and rejoining of double-stranded DNA.. Its function is as follows. A type II topoisomerase that negatively supercoils closed circular double-stranded (ds) DNA in an ATP-dependent manner to modulate DNA topology and maintain chromosomes in an underwound state. Negative supercoiling favors strand separation, and DNA replication, transcription, recombination and repair, all of which involve strand separation. Also able to catalyze the interconversion of other topological isomers of dsDNA rings, including catenanes and knotted rings. Type II topoisomerases break and join 2 DNA strands simultaneously in an ATP-dependent manner. This is DNA gyrase subunit B (gyrB) from Bacillus cereus.